The sequence spans 773 residues: Preaspterpenacid I synthase sttA (773 aa).

The sesterterpenoid synthase stretch occupies residues 4-359 (ISDVMKHCVP…RYHRTDLATT (356 aa)). Residue aspartate 105 participates in Mg(2+) binding. A substrate-binding site is contributed by aspartate 105. The substrate stretch occupies residues 211-214 (RVNE). Asparagine 255 is a binding site for substrate. Substrate stretches follow at residues 259–263 (SFPKE) and 350–351 (RY). The geranylfarnesyl diphosphate synthase stretch occupies residues 360-769 (AEDRATLIGK…RMMLLGMGPK (410 aa)). The disordered stretch occupies residues 423-447 (AFKKRNSRNGKQNGTEGSKSTFTNG). Residues 431–447 (NGKQNGTEGSKSTFTNG) are compositionally biased toward polar residues. Residues lysine 493, arginine 496, and histidine 525 each coordinate isopentenyl diphosphate. Residues aspartate 532 and aspartate 536 each coordinate Mg(2+). Arginine 541 contributes to the dimethylallyl diphosphate binding site. Arginine 542 provides a ligand contact to isopentenyl diphosphate. Residues lysine 614, threonine 615, glutamine 652, asparagine 659, and lysine 669 each contribute to the dimethylallyl diphosphate site.

The protein in the N-terminal section; belongs to the terpene synthase family. It in the C-terminal section; belongs to the FPP/GGPP synthase family.

The enzyme catalyses 4 isopentenyl diphosphate + dimethylallyl diphosphate = (2E,6E,10E,14E)-geranylfarnesyl diphosphate + 4 diphosphate. The catalysed reaction is (2E,6E,10E,14E)-geranylfarnesyl diphosphate + H2O = preaspterpenacid acid I + diphosphate. It functions in the pathway secondary metabolite biosynthesis; terpenoid biosynthesis. In terms of biological role, sesterterpenoid synthase; part of the gene cluster that mediates the biosynthesis of aspterpenacids. Performs both prenyl transferase and terpene cyclase activity, converting isopentenyl diphosphate and dimethylallyl diphosphate into geranylfarnesyl diphosphate (GFPP) and then converting GFPP into preaspterpenacid I. C22-oxidative modification of preaspterpenacid I by the cytochrome P450 monooxygenase sttB then leads to preaspterpenacid II. It has still to be determined how preaspterpenacid II is further modified to produce aspterpenacids. The protein is Preaspterpenacid I synthase sttA of Aspergillus terreus (strain NIH 2624 / FGSC A1156).